Reading from the N-terminus, the 545-residue chain is CTP synthase (545 aa).

An amidoligase domain region spans residues 1–266 (MTTNYIFVTG…DDYICKRFSL (266 aa)). Serine 14 is a binding site for CTP. Serine 14 serves as a coordination point for UTP. Residues 15 to 20 (SLGKGI) and aspartate 72 each bind ATP. Mg(2+) contacts are provided by aspartate 72 and glutamate 140. CTP is bound by residues 147-149 (DIE), 187-192 (KTKPTQ), and lysine 223. UTP-binding positions include 187–192 (KTKPTQ) and lysine 223. Residue 239 to 241 (KDV) coordinates ATP. A Glutamine amidotransferase type-1 domain is found at 291–542 (TIGMVGKYIE…VKAASEYQKR (252 aa)). L-glutamine is bound at residue glycine 352. Cysteine 379 acts as the Nucleophile; for glutamine hydrolysis in catalysis. Residues 380-383 (LGMQ), glutamate 403, and arginine 470 each bind L-glutamine. Active-site residues include histidine 515 and glutamate 517.

It belongs to the CTP synthase family. As to quaternary structure, homotetramer.

It carries out the reaction UTP + L-glutamine + ATP + H2O = CTP + L-glutamate + ADP + phosphate + 2 H(+). The catalysed reaction is L-glutamine + H2O = L-glutamate + NH4(+). The enzyme catalyses UTP + NH4(+) + ATP = CTP + ADP + phosphate + 2 H(+). It functions in the pathway pyrimidine metabolism; CTP biosynthesis via de novo pathway; CTP from UDP: step 2/2. Its activity is regulated as follows. Allosterically activated by GTP, when glutamine is the substrate; GTP has no effect on the reaction when ammonia is the substrate. The allosteric effector GTP functions by stabilizing the protein conformation that binds the tetrahedral intermediate(s) formed during glutamine hydrolysis. Inhibited by the product CTP, via allosteric rather than competitive inhibition. Catalyzes the ATP-dependent amination of UTP to CTP with either L-glutamine or ammonia as the source of nitrogen. Regulates intracellular CTP levels through interactions with the four ribonucleotide triphosphates. The sequence is that of CTP synthase from Klebsiella pneumoniae (strain 342).